A 317-amino-acid chain; its full sequence is MAVHVENLSDLAKTNDGVAVSLNRYTDWKCRSGVSEAPLIPASMMSKITDYAKTTAKGNSVALNYTHVVLSLAPTIGVAIPGHVTVELINPNVEGPFQVMSGQTLSWSPGAGKPCLMIFSVHHQLNSDHEPFRVRITNTGIPTKKSYARCHAYWGFDVGTRHRYYKSEPARLIELEVGYQRTLLSSIKAVEAYVQFTFDTSRMEKNPQLCTKSNVNIIPPKAETGSIRGIAPPLSVVPNQGRESKVLKQKGGTGSKTTKLPSLEPSSGSSSGLSMSRRSHRNVLNSSIPIKRNQDGNWLGDHLSDKGRVTDPNPERL.

The interval 223-317 (ETGSIRGIAP…RVTDPNPERL (95 aa)) is disordered. The segment covering 255–276 (SKTTKLPSLEPSSGSSSGLSMS) has biased composition (low complexity). A compositionally biased stretch (basic and acidic residues) spans 302-317 (HLSDKGRVTDPNPERL).

In terms of assembly, interacts with host glyceraldehyde 3-phosphate dehydrogenase-A/NbGAPDH-A; this interaction plays a positive role in cell-to-cell movement of the virus.

It localises to the host cell wall. The protein localises to the host endoplasmic reticulum membrane. In terms of biological role, plays an essential role in cell-to-cell movement and long-distance transport of the viral genome. Mechanistically, movement protein is recruited by viral replicase complexes formed on RNA1 to punctate structures on the host cortical endoplasmic reticulum. In turn, interacts with the viral genome and mediates virion movement from cell to cell. Also acts as a suppressor of RNA-mediated gene silencing, also known as post-transcriptional gene silencing (PTGS), a mechanism of plant viral defense that limits the accumulation of viral RNAs. This Red clover necrotic mosaic virus (RCNMV) protein is Movement protein.